We begin with the raw amino-acid sequence, 86 residues long: Small ribosomal subunit protein bS16 (86 aa).

This sequence belongs to the bacterial ribosomal protein bS16 family.

This Mycoplasmoides gallisepticum (strain R(low / passage 15 / clone 2)) (Mycoplasma gallisepticum) protein is Small ribosomal subunit protein bS16.